Reading from the N-terminus, the 356-residue chain is Alanine racemase, catabolic (356 aa).

Lysine 35 (proton acceptor; specific for D-alanine) is an active-site residue. Lysine 35 bears the N6-(pyridoxal phosphate)lysine mark. Position 130 (arginine 130) interacts with substrate. Tyrosine 253 acts as the Proton acceptor; specific for L-alanine in catalysis. Methionine 301 is a substrate binding site.

This sequence belongs to the alanine racemase family. Pyridoxal 5'-phosphate is required as a cofactor.

The enzyme catalyses L-alanine = D-alanine. Isomerizes L-alanine to D-alanine which is then oxidized to pyruvate by DadA. The polypeptide is Alanine racemase, catabolic (dadB) (Klebsiella aerogenes (Enterobacter aerogenes)).